A 414-amino-acid chain; its full sequence is Esterase FrsA (414 aa).

Belongs to the FrsA family.

It carries out the reaction a carboxylic ester + H2O = an alcohol + a carboxylate + H(+). Its function is as follows. Catalyzes the hydrolysis of esters. The protein is Esterase FrsA of Shigella boydii serotype 4 (strain Sb227).